Consider the following 277-residue polypeptide: Thymidylate synthase (277 aa).

Residue arginine 27 coordinates dUMP. Histidine 57 is a (6R)-5,10-methylene-5,6,7,8-tetrahydrofolate binding site. A dUMP-binding site is contributed by 132–133 (RR). The active-site Nucleophile is the cysteine 152. DUMP-binding positions include 179–182 (RSAD), asparagine 190, and 220–222 (HIY). Aspartate 182 contacts (6R)-5,10-methylene-5,6,7,8-tetrahydrofolate. Alanine 276 contacts (6R)-5,10-methylene-5,6,7,8-tetrahydrofolate.

This sequence belongs to the thymidylate synthase family. Bacterial-type ThyA subfamily. In terms of assembly, homodimer.

Its subcellular location is the cytoplasm. The catalysed reaction is dUMP + (6R)-5,10-methylene-5,6,7,8-tetrahydrofolate = 7,8-dihydrofolate + dTMP. Its pathway is pyrimidine metabolism; dTTP biosynthesis. Functionally, catalyzes the reductive methylation of 2'-deoxyuridine-5'-monophosphate (dUMP) to 2'-deoxythymidine-5'-monophosphate (dTMP) while utilizing 5,10-methylenetetrahydrofolate (mTHF) as the methyl donor and reductant in the reaction, yielding dihydrofolate (DHF) as a by-product. This enzymatic reaction provides an intracellular de novo source of dTMP, an essential precursor for DNA biosynthesis. In Acidovorax sp. (strain JS42), this protein is Thymidylate synthase.